The sequence spans 133 residues: ATP synthase epsilon chain (133 aa).

It belongs to the ATPase epsilon chain family. As to quaternary structure, F-type ATPases have 2 components, CF(1) - the catalytic core - and CF(0) - the membrane proton channel. CF(1) has five subunits: alpha(3), beta(3), gamma(1), delta(1), epsilon(1). CF(0) has three main subunits: a, b and c.

It is found in the cell membrane. Its function is as follows. Produces ATP from ADP in the presence of a proton gradient across the membrane. This is ATP synthase epsilon chain from Clostridium perfringens (strain ATCC 13124 / DSM 756 / JCM 1290 / NCIMB 6125 / NCTC 8237 / Type A).